Here is a 54-residue protein sequence, read N- to C-terminus: MGVREADRIQHDRVRKKREISPYLPVRDLEKSLDDRNRIYRSKSVYDPSWNTHH.

In Bos taurus (Bovine), this protein is Protein Vpw (vpw).